We begin with the raw amino-acid sequence, 352 residues long: Quinolinate synthase (352 aa).

The iminosuccinate site is built by His48 and Ser69. Cys114 is a [4Fe-4S] cluster binding site. Iminosuccinate-binding positions include 140–142 (YAN) and Ser157. Cys201 is a binding site for [4Fe-4S] cluster. Residues 227-229 (HPE) and Thr244 each bind iminosuccinate. A [4Fe-4S] cluster-binding site is contributed by Cys298.

This sequence belongs to the quinolinate synthase family. Type 1 subfamily. It depends on [4Fe-4S] cluster as a cofactor.

Its subcellular location is the cytoplasm. The catalysed reaction is iminosuccinate + dihydroxyacetone phosphate = quinolinate + phosphate + 2 H2O + H(+). It functions in the pathway cofactor biosynthesis; NAD(+) biosynthesis; quinolinate from iminoaspartate: step 1/1. Its function is as follows. Catalyzes the condensation of iminoaspartate with dihydroxyacetone phosphate to form quinolinate. The chain is Quinolinate synthase from Pseudomonas entomophila (strain L48).